The primary structure comprises 297 residues: tRNA dimethylallyltransferase (297 aa).

Residue 15–22 (GPTASGKS) participates in ATP binding. 17-22 (TASGKS) is a binding site for substrate. Interaction with substrate tRNA regions lie at residues 40 to 43 (DSMQ) and 164 to 168 (QRIVR).

It belongs to the IPP transferase family. In terms of assembly, monomer. Requires Mg(2+) as cofactor.

The catalysed reaction is adenosine(37) in tRNA + dimethylallyl diphosphate = N(6)-dimethylallyladenosine(37) in tRNA + diphosphate. In terms of biological role, catalyzes the transfer of a dimethylallyl group onto the adenine at position 37 in tRNAs that read codons beginning with uridine, leading to the formation of N6-(dimethylallyl)adenosine (i(6)A). The chain is tRNA dimethylallyltransferase from Rhizobium leguminosarum bv. trifolii (strain WSM2304).